A 201-amino-acid polypeptide reads, in one-letter code: CASP-like protein 2D1 (201 aa).

The Cytoplasmic portion of the chain corresponds to 1 to 26; it reads MRSGEGSTAAAAAAEEEKVKVAAPFR. A helical transmembrane segment spans residues 27–47; that stretch reads LAELGLRVCAVPLAVASVWEM. The Extracellular portion of the chain corresponds to 48-70; that stretch reads ATNKQVDETYGEVRFSDLSGFRY. The chain crosses the membrane as a helical span at residues 71–91; sequence LVWINAITAAYSVASILLSSC. Residues 92–98 lie on the Cytoplasmic side of the membrane; that stretch reads RFITRFD. The chain crosses the membrane as a helical span at residues 99–119; it reads WLIFILDQASAYLLLTSASAA. Topologically, residues 120–148 are extracellular; sequence AEVVYLAREGDREVSWGEVCSYFGRFCGA. Residues 149 to 169 form a helical membrane-spanning segment; it reads ATVSVALNAAALLCFMALSLI. The Cytoplasmic segment spans residues 170–201; sequence SAFRVFTKFNPPSQSNSKQQLSQEQGKPVVSG. Polar residues predominate over residues 180-194; the sequence is PPSQSNSKQQLSQEQ. A disordered region spans residues 180–201; it reads PPSQSNSKQQLSQEQGKPVVSG.

This sequence belongs to the Casparian strip membrane proteins (CASP) family. As to quaternary structure, homodimer and heterodimers.

It is found in the cell membrane. This is CASP-like protein 2D1 from Oryza sativa subsp. indica (Rice).